Reading from the N-terminus, the 408-residue chain is NADH-quinone oxidoreductase subunit D (408 aa).

This sequence belongs to the complex I 49 kDa subunit family. NDH-1 is composed of 14 different subunits. Subunits NuoB, C, D, E, F, and G constitute the peripheral sector of the complex.

The protein localises to the cell inner membrane. The catalysed reaction is a quinone + NADH + 5 H(+)(in) = a quinol + NAD(+) + 4 H(+)(out). Functionally, NDH-1 shuttles electrons from NADH, via FMN and iron-sulfur (Fe-S) centers, to quinones in the respiratory chain. The immediate electron acceptor for the enzyme in this species is believed to be ubiquinone. Couples the redox reaction to proton translocation (for every two electrons transferred, four hydrogen ions are translocated across the cytoplasmic membrane), and thus conserves the redox energy in a proton gradient. The polypeptide is NADH-quinone oxidoreductase subunit D (Campylobacter jejuni subsp. jejuni serotype O:2 (strain ATCC 700819 / NCTC 11168)).